Consider the following 131-residue polypeptide: Insulin-like 3 (131 aa).

Positions 1–24 (MDPRLPAWALVLLGPALVFALGPA) are cleaved as a signal peptide. Cystine bridges form between cysteine 34-cysteine 117, cysteine 46-cysteine 130, and cysteine 116-cysteine 121. Positions 58-104 (PVAAGDGELLQWLERRHLLYGLVANSEPAPGGPGLQPMPQTSHHHRH) are cleaved as a propeptide — c peptide like. The tract at residues 86 to 105 (APGGPGLQPMPQTSHHHRHR) is disordered.

The protein belongs to the insulin family. As to quaternary structure, heterodimer of a B chain and an A chain linked by two disulfide bonds. In terms of tissue distribution, highest expression in the Leydig cells of the testis.

Its subcellular location is the secreted. Seems to play a role in testicular function. May be a trophic hormone with a role in testicular descent in fetal life. Is a ligand for LGR8 receptor. This is Insulin-like 3 (INSL3) from Callithrix jacchus (White-tufted-ear marmoset).